A 92-amino-acid polypeptide reads, in one-letter code: Cell division protein FtsL (92 aa).

The Cytoplasmic portion of the chain corresponds to 1-3; the sequence is MGR. Residues 4–21 traverse the membrane as a helical segment; it reads ISLIVAALLMLSAISLVT. The Periplasmic portion of the chain corresponds to 22–92; the sequence is SRYQSRQLFI…YMNQPAGGAQ (71 aa).

This sequence belongs to the FtsL family. In terms of assembly, part of a complex composed of FtsB, FtsL and FtsQ.

It localises to the cell inner membrane. In terms of biological role, essential cell division protein. May link together the upstream cell division proteins, which are predominantly cytoplasmic, with the downstream cell division proteins, which are predominantly periplasmic. The polypeptide is Cell division protein FtsL (Bordetella pertussis (strain Tohama I / ATCC BAA-589 / NCTC 13251)).